We begin with the raw amino-acid sequence, 185 residues long: Ribosome-recycling factor (185 aa).

Belongs to the RRF family.

Its subcellular location is the cytoplasm. In terms of biological role, responsible for the release of ribosomes from messenger RNA at the termination of protein biosynthesis. May increase the efficiency of translation by recycling ribosomes from one round of translation to another. The sequence is that of Ribosome-recycling factor from Aeromonas hydrophila subsp. hydrophila (strain ATCC 7966 / DSM 30187 / BCRC 13018 / CCUG 14551 / JCM 1027 / KCTC 2358 / NCIMB 9240 / NCTC 8049).